The primary structure comprises 140 residues: Large-conductance mechanosensitive channel (140 aa).

The next 3 membrane-spanning stretches (helical) occupy residues Glu7–Phe27, Ile30–Val50, and Gly64–Val84.

It belongs to the MscL family. As to quaternary structure, homopentamer.

The protein resides in the cell membrane. In terms of biological role, channel that opens in response to stretch forces in the membrane lipid bilayer. May participate in the regulation of osmotic pressure changes within the cell. In Staphylococcus carnosus (strain TM300), this protein is Large-conductance mechanosensitive channel.